Reading from the N-terminus, the 122-residue chain is Large ribosomal subunit protein uL14c (122 aa).

Belongs to the universal ribosomal protein uL14 family. In terms of assembly, part of the 50S ribosomal subunit.

It is found in the plastid. Binds to 23S rRNA. The chain is Large ribosomal subunit protein uL14c from Cuscuta reflexa (Southern Asian dodder).